The sequence spans 284 residues: MDAIKKKMQAMKIEKDNALDRADAAEEKVRQITEKLERVEEELRDTQKKMTQTGDDLDKAQEDLSAATSKLEEKEKTVQEAEAEVASLNRRMTLLEEELERAEERLKIATEKLEEATHNVDESERVRKVMENRSLQDEERANTVEAQLKEAQLLAEEADRKYDEVARKLAMVEADLERAEERAEAGENKIVELEEELRVVGNNLKSLEVSEEKALQREDSYEEQIRTVSSRLKEAETRAEFAERSVQKLQKEVDRLEDELVHEKERYKTISEELDSTFQELSGY.

Residues 1-284 adopt a coiled-coil conformation; it reads MDAIKKKMQA…DSTFQELSGY (284 aa). The tract at residues 40 to 78 is disordered; it reads EEELRDTQKKMTQTGDDLDKAQEDLSAATSKLEEKEKTV.

This sequence belongs to the tropomyosin family. As to expression, isoform a and isoform d are expressed in body wall muscles, vulva, anus muscles and male tail muscles. Located to the myofibrils of thin actin filaments.

The protein localises to the cytoplasm. It is found in the myofibril. It localises to the sarcomere. Its subcellular location is the i band. Its function is as follows. Tropomyosin, in association with the troponin complex, plays a central role in the calcium dependent regulation of muscle contraction. Involved in muscle actin filament organization and muscle arm extension and morphology. Protects actin filaments from depolymerization by unc-60 in vitro. Also has a role in male mating behavior by regulating the copulatory spicules. Binds to F-actin. This Caenorhabditis elegans protein is Tropomyosin isoforms a/b/d/f (lev-11).